Here is a 189-residue protein sequence, read N- to C-terminus: S-protein homolog 26 (189 aa).

The first 25 residues, 1–25 (MISMNRLSILLFVFAFGLTMMSNTA), serve as a signal peptide directing secretion.

The protein belongs to the plant self-incompatibility (S1) protein family.

Its subcellular location is the secreted. This chain is S-protein homolog 26, found in Arabidopsis thaliana (Mouse-ear cress).